A 471-amino-acid chain; its full sequence is 3-isopropylmalate dehydratase large subunit (471 aa).

[4Fe-4S] cluster contacts are provided by C347, C409, and C412.

It belongs to the aconitase/IPM isomerase family. LeuC type 1 subfamily. Heterodimer of LeuC and LeuD. [4Fe-4S] cluster is required as a cofactor.

It carries out the reaction (2R,3S)-3-isopropylmalate = (2S)-2-isopropylmalate. It functions in the pathway amino-acid biosynthesis; L-leucine biosynthesis; L-leucine from 3-methyl-2-oxobutanoate: step 2/4. Its function is as follows. Catalyzes the isomerization between 2-isopropylmalate and 3-isopropylmalate, via the formation of 2-isopropylmaleate. This Buchnera aphidicola subsp. Rhopalosiphum padi protein is 3-isopropylmalate dehydratase large subunit.